The sequence spans 818 residues: SIT4-associating protein SAP4 (818 aa).

Disordered stretches follow at residues 33–60 (ETSS…RDRS) and 499–526 (TSNT…KNIK). Residues 509 to 518 (NNDSNDSNDN) are compositionally biased toward low complexity.

It belongs to the SAPS family. Hyperphosphorylated in the absence of SIT4.

Functionally, associates with the SIT4 phosphatase in a cell cycle dependent manner. May be directly or indirectly involved in SIT4-dependent functions in budding and in normal G1 cyclin expression. The protein is SIT4-associating protein SAP4 (SAP4) of Saccharomyces cerevisiae (strain ATCC 204508 / S288c) (Baker's yeast).